A 125-amino-acid polypeptide reads, in one-letter code: Small ribosomal subunit protein uS13 (125 aa).

Belongs to the universal ribosomal protein uS13 family. In terms of assembly, part of the 30S ribosomal subunit. Forms a loose heterodimer with protein S19. Forms two bridges to the 50S subunit in the 70S ribosome.

In terms of biological role, located at the top of the head of the 30S subunit, it contacts several helices of the 16S rRNA. In the 70S ribosome it contacts the 23S rRNA (bridge B1a) and protein L5 of the 50S subunit (bridge B1b), connecting the 2 subunits; these bridges are implicated in subunit movement. Contacts the tRNAs in the A and P-sites. In Rickettsia prowazekii (strain Madrid E), this protein is Small ribosomal subunit protein uS13.